The primary structure comprises 607 residues: Chaperone protein DnaK (607 aa).

The residue at position 173 (Thr-173) is a Phosphothreonine; by autocatalysis. Basic and acidic residues-rich tracts occupy residues 490–509 (EQNAEEDKKRREESDLRNEA) and 524–542 (GDNVSEDDKKQAEDKKEAL). Disordered stretches follow at residues 490–510 (EQNAEEDKKRREESDLRNEAD), 524–555 (GDNVSEDDKKQAEDKKEALKSALEGQDLEDIK), and 574–607 (QQAQQGDAAGSNQSDVEDAEYTEVKDDDDKKDNK). Residues 574-587 (QQAQQGDAAGSNQS) show a composition bias toward polar residues. The segment covering 595-607 (TEVKDDDDKKDNK) has biased composition (basic and acidic residues).

Belongs to the heat shock protein 70 family.

Its function is as follows. Acts as a chaperone. The chain is Chaperone protein DnaK from Staphylococcus carnosus (strain TM300).